Here is a 506-residue protein sequence, read N- to C-terminus: RNA-splicing ligase RtcB homolog (506 aa).

Asp-120, Cys-123, His-228, His-260, and His-354 together coordinate Mn(2+). Position 227-231 (227-231 (NHYAE)) interacts with GMP. GMP contacts are provided by residues 354–355 (HN), 403–406 (GGTM), Ser-410, 429–432 (HGAG), and Lys-505. Residue His-429 is the GMP-histidine intermediate of the active site.

Belongs to the RtcB family. In terms of assembly, catalytic component of the tRNA-splicing ligase complex. Mn(2+) serves as cofactor.

It catalyses the reaction a 3'-end 3'-phospho-ribonucleotide-RNA + a 5'-end dephospho-ribonucleoside-RNA + GTP = a ribonucleotidyl-ribonucleotide-RNA + GMP + diphosphate. The enzyme catalyses a 3'-end 2',3'-cyclophospho-ribonucleotide-RNA + a 5'-end dephospho-ribonucleoside-RNA + GTP + H2O = a ribonucleotidyl-ribonucleotide-RNA + GMP + diphosphate + H(+). Functionally, catalytic subunit of the tRNA-splicing ligase complex that acts by directly joining spliced tRNA halves to mature-sized tRNAs by incorporating the precursor-derived splice junction phosphate into the mature tRNA as a canonical 3',5'-phosphodiester. May act as an RNA ligase with broad substrate specificity, and may function toward other RNAs. This is RNA-splicing ligase RtcB homolog from Drosophila melanogaster (Fruit fly).